The sequence spans 236 residues: Biosynthetic peptidoglycan transglycosylase (236 aa).

A helical transmembrane segment spans residues 20–40 (GLVVAAVLALIPTMLTFLYLP).

Belongs to the glycosyltransferase 51 family.

It localises to the cell inner membrane. It catalyses the reaction [GlcNAc-(1-&gt;4)-Mur2Ac(oyl-L-Ala-gamma-D-Glu-L-Lys-D-Ala-D-Ala)](n)-di-trans,octa-cis-undecaprenyl diphosphate + beta-D-GlcNAc-(1-&gt;4)-Mur2Ac(oyl-L-Ala-gamma-D-Glu-L-Lys-D-Ala-D-Ala)-di-trans,octa-cis-undecaprenyl diphosphate = [GlcNAc-(1-&gt;4)-Mur2Ac(oyl-L-Ala-gamma-D-Glu-L-Lys-D-Ala-D-Ala)](n+1)-di-trans,octa-cis-undecaprenyl diphosphate + di-trans,octa-cis-undecaprenyl diphosphate + H(+). It functions in the pathway cell wall biogenesis; peptidoglycan biosynthesis. Functionally, peptidoglycan polymerase that catalyzes glycan chain elongation from lipid-linked precursors. This chain is Biosynthetic peptidoglycan transglycosylase, found in Mesorhizobium japonicum (strain LMG 29417 / CECT 9101 / MAFF 303099) (Mesorhizobium loti (strain MAFF 303099)).